A 395-amino-acid chain; its full sequence is S-adenosylmethionine synthase 3 (395 aa).

A Mg(2+)-binding site is contributed by Glu10. Residue His16 participates in ATP binding. K(+) is bound at residue Glu44. Positions 57 and 100 each coordinate L-methionine. ATP contacts are provided by residues 168–170 (DGK), 236–239 (SGRF), Asp247, 253–254 (RK), Ala270, Lys274, and Lys278. Asp247 contacts L-methionine. Lys278 serves as a coordination point for L-methionine.

Belongs to the AdoMet synthase family. In terms of assembly, homotetramer. Mn(2+) serves as cofactor. It depends on Mg(2+) as a cofactor. The cofactor is Co(2+). K(+) is required as a cofactor.

The protein resides in the cytoplasm. It catalyses the reaction L-methionine + ATP + H2O = S-adenosyl-L-methionine + phosphate + diphosphate. It participates in amino-acid biosynthesis; S-adenosyl-L-methionine biosynthesis; S-adenosyl-L-methionine from L-methionine: step 1/1. Its function is as follows. Catalyzes the formation of S-adenosylmethionine from methionine and ATP. The reaction comprises two steps that are both catalyzed by the same enzyme: formation of S-adenosylmethionine (AdoMet) and triphosphate, and subsequent hydrolysis of the triphosphate. This chain is S-adenosylmethionine synthase 3 (METK3), found in Populus trichocarpa (Western balsam poplar).